The following is a 403-amino-acid chain: Tyrosine--tRNA ligase (403 aa).

The 'HIGH' region motif lies at proline 45–histidine 54. The short motif at lysine 229–serine 233 is the 'KMSKS' region element. Lysine 232 provides a ligand contact to ATP. Residues valine 341–phenylalanine 402 enclose the S4 RNA-binding domain.

This sequence belongs to the class-I aminoacyl-tRNA synthetase family. TyrS type 2 subfamily. In terms of assembly, homodimer.

The protein localises to the cytoplasm. The catalysed reaction is tRNA(Tyr) + L-tyrosine + ATP = L-tyrosyl-tRNA(Tyr) + AMP + diphosphate + H(+). Functionally, catalyzes the attachment of tyrosine to tRNA(Tyr) in a two-step reaction: tyrosine is first activated by ATP to form Tyr-AMP and then transferred to the acceptor end of tRNA(Tyr). This Geobacter metallireducens (strain ATCC 53774 / DSM 7210 / GS-15) protein is Tyrosine--tRNA ligase.